A 173-amino-acid chain; its full sequence is Lipid A deacylase PagL (173 aa).

The first 23 residues, 1–23 (MKKLLPLAVLAALSSVHVASAQA), serve as a signal peptide directing secretion. The Periplasmic portion of the chain corresponds to 25–28 (DVSA). A beta stranded membrane pass occupies residues 29 to 32 (AVGA). Threonine 33 is a topological domain (periplasmic). A beta stranded transmembrane segment spans residues 34-49 (GQSGMTYRLGLSWDWD). At 50–56 (KSWWQTS) the chain is on the extracellular side. The chain crosses the membrane as a beta stranded span at residues 57-71 (TGRLTGYWDAGYTYW). Over 72-73 (EG) the chain is Periplasmic. Residues 74 to 89 (GDEGAGKHSLSFAPVF) form a beta stranded membrane-spanning segment. A topological domain (extracellular) is located at residue valine 90. Residues 91–93 (YEF) traverse the membrane as a beta stranded segment. At 94–95 (AG) the chain is on the periplasmic side. A beta stranded membrane pass occupies residues 96-98 (DSI). The Extracellular portion of the chain corresponds to 99-100 (KP). Residues 101–115 (FIEAGIGVAAFSGTR) form a beta stranded membrane-spanning segment. The Periplasmic segment spans residues 116-117 (VG). The chain crosses the membrane as a beta stranded span at residues 118-128 (DQNLGSSLNFE). Residues 129–138 (DRIGAGLKFA) lie on the Extracellular side of the membrane. The beta stranded transmembrane segment at 139 to 148 (NGQSVGVRAI) threads the bilayer. Residues histidine 149, serine 151, and glutamate 163 each act as charge relay system in the active site. Residues 149–173 (HYSNAGLKQPNDGIESYSLFYKIPI) are Periplasmic-facing.

The protein belongs to the PagL family. As to quaternary structure, homodimer.

The protein resides in the cell outer membrane. The catalysed reaction is a 3-(acyloxy)acyl derivative of bacterial toxin + H2O = a 3-hydroxyacyl derivative of bacterial toxin + a fatty acid + H(+). With respect to regulation, decreased activity at low temperatures (15 or 21 degrees Celsius). Its function is as follows. Has lipid A 3-O-deacylase activity. Hydrolyzes the ester bond at the 3 position of lipid A, a bioactive component of lipopolysaccharide (LPS), thereby releasing the primary fatty acyl moiety. Lacks fatty acyl chain-length specificity as removes both 3-OH C10 and 3-OH C14 fatty acids from lipid A. The sequence is that of Lipid A deacylase PagL from Pseudomonas aeruginosa (strain ATCC 15692 / DSM 22644 / CIP 104116 / JCM 14847 / LMG 12228 / 1C / PRS 101 / PAO1).